The chain runs to 383 residues: BRISC and BRCA1-A complex member 2 (383 aa).

Methionine 1 is subject to N-acetylmethionine. Phosphoserine is present on serine 2. 2 UEV-like regions span residues 30 to 147 (DATN…TLLE) and 275 to 364 (IAAF…RAKA).

It belongs to the BABAM2 family. In terms of assembly, component of the ARISC complex, at least composed of UIMC1/RAP80, ABRAXAS1, BRCC3/BRCC36, BABAM2 and BABAM1/NBA1. Component of the BRCA1-A complex, at least composed of BRCA1, BARD1, UIMC1/RAP80, ABRAXAS1, BRCC3/BRCC36, BABAM2 and BABAM1/NBA1. In the BRCA1-A complex, interacts directly with ABRAXAS1, BRCC3/BRCC36 and BABAM1/NBA1. Binds polyubiquitin. Component of the BRISC complex, at least composed of ABRAXAS2, BRCC3/BRCC36, BABAM2 and BABAM1/NBA1. Identified in a complex with SHMT2 and the other subunits of the BRISC complex. Component of the BRCA1/BRCA2 containing complex (BRCC), which also contains BRCA1, BRCA2, BARD1, BRCC3/BRCC36 and RAD51. BRCC is a ubiquitin E3 ligase complex that enhances cellular survival following DNA damage. May interact with FAS and TNFRSF1A. As to expression, expressed in brain, heart, kidney, liver, lung, testis, germinal center B-cells and various mouse cell lines.

The protein localises to the cytoplasm. The protein resides in the nucleus. In terms of biological role, component of the BRCA1-A complex, a complex that specifically recognizes 'Lys-63'-linked ubiquitinated histones H2A and H2AX at DNA lesions sites, leading to target the BRCA1-BARD1 heterodimer to sites of DNA damage at double-strand breaks (DSBs). The BRCA1-A complex also possesses deubiquitinase activity that specifically removes 'Lys-63'-linked ubiquitin on histones H2A and H2AX. In the BRCA1-A complex, it acts as an adapter that bridges the interaction between BABAM1/NBA1 and the rest of the complex, thereby being required for the complex integrity and modulating the E3 ubiquitin ligase activity of the BRCA1-BARD1 heterodimer. Probably also plays a role as a component of the BRISC complex, a multiprotein complex that specifically cleaves 'Lys-63'-linked ubiquitin. May regulate TNF-alpha signaling through its interactions with TNFRSF1A. Component of the BRCA1-A complex, a complex that specifically recognizes 'Lys-63'-linked ubiquitinated histones H2A and H2AX at DNA lesions sites, leading to target the BRCA1-BARD1 heterodimer to sites of DNA damage at double-strand breaks (DSBs). The BRCA1-A complex also possesses deubiquitinase activity that specifically removes 'Lys-63'-linked ubiquitin on histones H2A and H2AX. In the BRCA1-A complex, it acts as an adapter that bridges the interaction between BABAM1/NBA1 and the rest of the complex, thereby being required for the complex integrity and modulating the E3 ubiquitin ligase activity of the BRCA1-BARD1 heterodimer. Component of the BRISC complex, a multiprotein complex that specifically cleaves 'Lys-63'-linked ubiquitin in various substrates. Within the BRISC complex, acts as an adapter that bridges the interaction between BABAM1/NBA1 and the rest of the complex, thereby being required for the complex integrity. The BRISC complex is required for normal mitotic spindle assembly and microtubule attachment to kinetochores via its role in deubiquitinating NUMA1. The BRISC complex plays a role in interferon signaling via its role in the deubiquitination of the interferon receptor IFNAR1; deubiquitination increases IFNAR1 activity by enhancing its stability and cell surface expression. Down-regulates the response to bacterial lipopolysaccharide (LPS) via its role in IFNAR1 deubiquitination. May play a role in homeostasis or cellular differentiation in cells of neural, epithelial and germline origins. May also act as a death receptor-associated anti-apoptotic protein, which inhibits the mitochondrial apoptotic pathway. May regulate TNF-alpha signaling through its interactions with TNFRSF1A; however these effects may be indirect. This is BRISC and BRCA1-A complex member 2 (Babam2) from Mus musculus (Mouse).